Here is a 111-residue protein sequence, read N- to C-terminus: MKSSAVLKGLQMSPQKARLVADLVRGQPVGKALEILRFTTKKAALPIRKCLESAIANAENNEGADVDALVVEQIMIDGGAVLKRFAARAKGRGSRILKRTSHITVVVAEVY.

It belongs to the universal ribosomal protein uL22 family. In terms of assembly, part of the 50S ribosomal subunit.

Functionally, this protein binds specifically to 23S rRNA; its binding is stimulated by other ribosomal proteins, e.g. L4, L17, and L20. It is important during the early stages of 50S assembly. It makes multiple contacts with different domains of the 23S rRNA in the assembled 50S subunit and ribosome. The globular domain of the protein is located near the polypeptide exit tunnel on the outside of the subunit, while an extended beta-hairpin is found that lines the wall of the exit tunnel in the center of the 70S ribosome. This is Large ribosomal subunit protein uL22 from Acidithiobacillus ferrooxidans (strain ATCC 23270 / DSM 14882 / CIP 104768 / NCIMB 8455) (Ferrobacillus ferrooxidans (strain ATCC 23270)).